The following is a 501-amino-acid chain: Probable cytosol aminopeptidase (501 aa).

Residues Lys257 and Asp262 each coordinate Mn(2+). The active site involves Lys269. Asp281, Asp341, and Glu343 together coordinate Mn(2+). Residue Arg345 is part of the active site.

It belongs to the peptidase M17 family. It depends on Mn(2+) as a cofactor.

It is found in the cytoplasm. It catalyses the reaction Release of an N-terminal amino acid, Xaa-|-Yaa-, in which Xaa is preferably Leu, but may be other amino acids including Pro although not Arg or Lys, and Yaa may be Pro. Amino acid amides and methyl esters are also readily hydrolyzed, but rates on arylamides are exceedingly low.. The enzyme catalyses Release of an N-terminal amino acid, preferentially leucine, but not glutamic or aspartic acids.. Presumably involved in the processing and regular turnover of intracellular proteins. Catalyzes the removal of unsubstituted N-terminal amino acids from various peptides. The polypeptide is Probable cytosol aminopeptidase (Synechococcus sp. (strain RCC307)).